Consider the following 997-residue polypeptide: uncharacterized protein (997 aa).

It belongs to the MG414/MG415 family.

This is an uncharacterized protein from Mycoplasma pneumoniae (strain ATCC 29342 / M129 / Subtype 1) (Mycoplasmoides pneumoniae).